We begin with the raw amino-acid sequence, 154 residues long: MAYLELDLQIATEETANLPSEADFRLWVEKALPEVDEEFEVTIRIVDEEESHALNHEYRGKDKPTNVLSFPFEAPPGLELPLLGDLVICAQIVAKEAAEQNKELFHHWAHMTIHGILHLRGYDHINDDEADEMESIETELLASLSISDPYLIKE.

The Zn(2+) site is built by H114, H118, and H124.

This sequence belongs to the endoribonuclease YbeY family. The cofactor is Zn(2+).

It localises to the cytoplasm. Functionally, single strand-specific metallo-endoribonuclease involved in late-stage 70S ribosome quality control and in maturation of the 3' terminus of the 16S rRNA. The protein is Endoribonuclease YbeY of Marinomonas sp. (strain MWYL1).